A 94-amino-acid polypeptide reads, in one-letter code: Large ribosomal subunit protein uL23 (94 aa).

Belongs to the universal ribosomal protein uL23 family. As to quaternary structure, part of the 50S ribosomal subunit. Contacts protein L29, and trigger factor when it is bound to the ribosome.

In terms of biological role, one of the early assembly proteins it binds 23S rRNA. One of the proteins that surrounds the polypeptide exit tunnel on the outside of the ribosome. Forms the main docking site for trigger factor binding to the ribosome. The sequence is that of Large ribosomal subunit protein uL23 from Listeria innocua serovar 6a (strain ATCC BAA-680 / CLIP 11262).